A 275-amino-acid chain; its full sequence is 4-diphosphocytidyl-2-C-methyl-D-erythritol kinase (275 aa).

Residue K14 is part of the active site. Residue 94–104 participates in ATP binding; that stretch reads PMEAGLGGGSA. D134 is an active-site residue.

The protein belongs to the GHMP kinase family. IspE subfamily.

The catalysed reaction is 4-CDP-2-C-methyl-D-erythritol + ATP = 4-CDP-2-C-methyl-D-erythritol 2-phosphate + ADP + H(+). The protein operates within isoprenoid biosynthesis; isopentenyl diphosphate biosynthesis via DXP pathway; isopentenyl diphosphate from 1-deoxy-D-xylulose 5-phosphate: step 3/6. In terms of biological role, catalyzes the phosphorylation of the position 2 hydroxy group of 4-diphosphocytidyl-2C-methyl-D-erythritol. This chain is 4-diphosphocytidyl-2-C-methyl-D-erythritol kinase, found in Thermosipho africanus (strain TCF52B).